A 345-amino-acid chain; its full sequence is MEEQLKQLEQEALAKIEAAASLKELNEVRVAYLGKKGPITDLLKGMGKLSAEERPKMGALVNNVRENVTAVLESKAAVLEEAAIAEKLASESIDVTLPGRAIKVGNRHPLTRVIEEIEDLFIGMGYEIAEGPEVEKDYYNFEALNLPKGHPARDMQDSFYISEEILLRTHTSPVQARTMEAKKGESIRIICPGKVFRRDNDDATHSHQFMQIEGLVIGENIRMSDLKGTLDTLAKKMFGAEREIRLRPSFFPFTEPSVEMDISCFKCGGAGCNVCKSTGWIEILGAGMVHPNVLEMAGYDPKKVSGFAFGIGAERIAMLKYGVDDIRHFYTSDTRFLSQFERTEA.

Glu255 provides a ligand contact to Mg(2+).

It belongs to the class-II aminoacyl-tRNA synthetase family. Phe-tRNA synthetase alpha subunit type 1 subfamily. Tetramer of two alpha and two beta subunits. Mg(2+) serves as cofactor.

It localises to the cytoplasm. It catalyses the reaction tRNA(Phe) + L-phenylalanine + ATP = L-phenylalanyl-tRNA(Phe) + AMP + diphosphate + H(+). The polypeptide is Phenylalanine--tRNA ligase alpha subunit (Lysinibacillus sphaericus (strain C3-41)).